Consider the following 435-residue polypeptide: Galactose/lactose metabolism regulatory protein GAL80 (435 aa).

Met-1 is subject to N-acetylmethionine.

To K.lactis GAL80. Monomer.

Its function is as follows. This protein is a negative regulator for the gene expression of the lactose/galactose metabolic genes. It binds to GAL4 and so blocks transcriptional activation by it, in the absence of an inducing sugar. This Saccharomyces cerevisiae (strain ATCC 204508 / S288c) (Baker's yeast) protein is Galactose/lactose metabolism regulatory protein GAL80 (GAL80).